The primary structure comprises 110 residues: Envelope glycoprotein N (110 aa).

Residues 1–17 (MTASTVALALFVASILG) form the signal peptide. The Virion surface portion of the chain corresponds to 18-80 (HCWVTANSTG…SLSSFSSVWA (63 aa)). Residues 28–41 (VASSTERSSPSTAG) show a composition bias toward polar residues. The disordered stretch occupies residues 28-51 (VASSTERSSPSTAGLSARPSPGPT). The chain crosses the membrane as a helical span at residues 81–101 (LINALLVVVATFFYLVYLCFF). At 102–110 (KFVDEVVHA) the chain is on the intravirion side.

It belongs to the herpesviridae glycoprotein N family. In terms of assembly, interacts (via N-terminus) with gM (via N-terminus). The gM-gN heterodimer forms the gCII complex. O-glycosylated. Contains alpha 2,6-sialic acid residues. N-glycosylated.

Its subcellular location is the virion membrane. The protein localises to the host membrane. It is found in the host Golgi apparatus. It localises to the host trans-Golgi network. In terms of biological role, envelope glycoprotein necessary for proper maturation of gM and modulation of its membrane fusion activity. Also plays a critical role in virion morphogenesis. This chain is Envelope glycoprotein N, found in Homo sapiens (Human).